Reading from the N-terminus, the 308-residue chain is Pseudouridine-5'-phosphate glycosidase (308 aa).

Glu28 (proton donor) is an active-site residue. Positions 89 and 109 each coordinate substrate. Asp141 is a Mn(2+) binding site. 143-145 (SAD) contributes to the substrate binding site. Lys162 acts as the Nucleophile in catalysis.

It belongs to the pseudouridine-5'-phosphate glycosidase family. In terms of assembly, homotrimer. It depends on Mn(2+) as a cofactor.

The enzyme catalyses D-ribose 5-phosphate + uracil = psi-UMP + H2O. Catalyzes the reversible cleavage of pseudouridine 5'-phosphate (PsiMP) to ribose 5-phosphate and uracil. Functions biologically in the cleavage direction, as part of a pseudouridine degradation pathway. The chain is Pseudouridine-5'-phosphate glycosidase from Brachyspira hyodysenteriae (strain ATCC 49526 / WA1).